A 684-amino-acid chain; its full sequence is Glycine--tRNA ligase beta subunit (684 aa).

It belongs to the class-II aminoacyl-tRNA synthetase family. As to quaternary structure, tetramer of two alpha and two beta subunits.

The protein resides in the cytoplasm. The catalysed reaction is tRNA(Gly) + glycine + ATP = glycyl-tRNA(Gly) + AMP + diphosphate. This chain is Glycine--tRNA ligase beta subunit, found in Pseudomonas savastanoi pv. phaseolicola (strain 1448A / Race 6) (Pseudomonas syringae pv. phaseolicola (strain 1448A / Race 6)).